An 838-amino-acid chain; its full sequence is Translation initiation factor IF-2 (838 aa).

Residues 50 to 108 (VQSGKKPESPEKKDIKQNTQKEAPETQTQQKPIEQEVETKQNIDSTPIKVEPKQESLAS) form a disordered region. Residues 54–65 (KKPESPEKKDIK) are compositionally biased toward basic and acidic residues. Residues 66–81 (QNTQKEAPETQTQQKP) show a composition bias toward polar residues. Residues 337–506 (SRAPVVTIMG…LLQAELLELK (170 aa)) enclose the tr-type G domain. Positions 346–353 (GHVDHGKT) are G1. Residue 346-353 (GHVDHGKT) participates in GTP binding. The segment at 371–375 (GITQH) is G2. A G3 region spans residues 392–395 (DTPG). GTP is bound by residues 392–396 (DTPGH) and 446–449 (NKMD). The G4 stretch occupies residues 446 to 449 (NKMD). Residues 482-484 (SAK) form a G5 region.

This sequence belongs to the TRAFAC class translation factor GTPase superfamily. Classic translation factor GTPase family. IF-2 subfamily.

It is found in the cytoplasm. One of the essential components for the initiation of protein synthesis. Protects formylmethionyl-tRNA from spontaneous hydrolysis and promotes its binding to the 30S ribosomal subunits. Also involved in the hydrolysis of GTP during the formation of the 70S ribosomal complex. In Campylobacter fetus subsp. fetus (strain 82-40), this protein is Translation initiation factor IF-2.